The primary structure comprises 333 residues: Quinolinate synthase (333 aa).

Iminosuccinate contacts are provided by histidine 41 and serine 58. Cysteine 103 is a [4Fe-4S] cluster binding site. Residues 129–131 (YIN) and serine 146 contribute to the iminosuccinate site. A [4Fe-4S] cluster-binding site is contributed by cysteine 189. Iminosuccinate is bound by residues 215-217 (HPE) and threonine 232. Cysteine 282 is a [4Fe-4S] cluster binding site.

The protein belongs to the quinolinate synthase family. Type 2 subfamily. It depends on [4Fe-4S] cluster as a cofactor.

The protein localises to the cytoplasm. It carries out the reaction iminosuccinate + dihydroxyacetone phosphate = quinolinate + phosphate + 2 H2O + H(+). The protein operates within cofactor biosynthesis; NAD(+) biosynthesis; quinolinate from iminoaspartate: step 1/1. In terms of biological role, catalyzes the condensation of iminoaspartate with dihydroxyacetone phosphate to form quinolinate. This Prochlorococcus marinus (strain MIT 9303) protein is Quinolinate synthase.